The sequence spans 200 residues: MFRKGKKRHSSSSSQSSEISTKSKSVDSSLGGLSRSSTVASLDTDSTKSSGQSNNNSDTCAEFRIKYVGAIEKLKLSEGKSLEGPLDLINYIDVAQQDGKLPFVPLEEEFIMGVSKYGIKVSTSDQYDVLHRHALYLIIRMVCYDDGLGSGKSLLALKTTDANNQEYSLWVYQCNSLEQAQAICKVLSTAFDSVLTSEKP.

Residues 1-10 show a composition bias toward basic residues; that stretch reads MFRKGKKRHS. Positions 1–56 are disordered; the sequence is MFRKGKKRHSSSSSQSSEISTKSKSVDSSLGGLSRSSTVASLDTDSTKSSGQSNNN. A Nuclear localization signal motif is present at residues 6–7; it reads KK. Positions 11-29 are enriched in low complexity; sequence SSSSQSSEISTKSKSVDSS. Residues 34-56 are compositionally biased toward polar residues; that stretch reads SRSSTVASLDTDSTKSSGQSNNN. Position 38 is a phosphothreonine; by CaMK2 (Thr38). Position 41 is a phosphoserine (Ser41). The PID domain maps to 58–200; sequence DTCAEFRIKY…FDSVLTSEKP (143 aa). The segment at 136–139 is interaction with KRIT1; sequence YLII. Residues 139–141 are interaction with ITGB1; the sequence is IRM.

Interacts (via N-terminus and PTB domain) with ROCK1. Found in a complex, at least composed of ITGB1BP1, KRIT1 and RAP1A. Interacts (via C-terminal region) with ITGB1 (via C-terminal cytoplasmic tail); the interaction prevents talin TLN1 binding to ITGB1 and KRIT1 and ITGB1 compete for the same binding site. Interacts with KRIT1 (via N-terminal NPXY motif); the interaction induces the opening conformation of KRIT1 and KRIT1 and ITGB1 compete for the same binding site. Isoform 2 does not interact with ITGB1. Interacts with CDC42 (GTP- or GDP-bound form); the interaction is increased with the CDC42-membrane bound forms and prevents both CDC42 activation and cell spreading. Interacts (via C-terminal domain region) with NME2. Interacts with FERMT2 and RAC1. In terms of processing, phosphorylation at Thr-38 seems to enhance integrin alpha5beta1-mediated cell adhesion. The degree of phosphorylation is regulated by integrin-dependent cell-matrix interaction.

Its subcellular location is the nucleus. The protein resides in the cytoplasm. The protein localises to the cytoskeleton. It is found in the cell membrane. It localises to the cell projection. Its subcellular location is the lamellipodium. The protein resides in the ruffle. In terms of biological role, key regulator of the integrin-mediated cell-matrix interaction signaling by binding to the ITGB1 cytoplasmic tail and preventing the activation of integrin alpha-5/beta-1 (heterodimer of ITGA5 and ITGB1) by talin or FERMT1. Plays a role in cell proliferation, differentiation, spreading, adhesion and migration in the context of mineralization and bone development and angiogenesis. Stimulates cellular proliferation in a fibronectin-dependent manner. Involved in the regulation of beta-1 integrin-containing focal adhesion (FA) site dynamics by controlling its assembly rate during cell adhesion; inhibits beta-1 integrin clustering within FA by directly competing with talin TLN1, and hence stimulates osteoblast spreading and migration in a fibronectin- and/or collagen-dependent manner. Acts as a guanine nucleotide dissociation inhibitor (GDI) by regulating Rho family GTPases during integrin-mediated cell matrix adhesion; reduces the level of active GTP-bound form of both CDC42 and RAC1 GTPases upon cell adhesion to fibronectin. Stimulates the release of active CDC42 from the membranes to maintain it in an inactive cytoplasmic pool. Participates in the translocation of the Rho-associated protein kinase ROCK1 to membrane ruffles at cell leading edges of the cell membrane, leading to an increase of myoblast cell migration on laminin. Plays a role in bone mineralization at a late stage of osteoblast differentiation; modulates the dynamic formation of focal adhesions into fibrillar adhesions, which are adhesive structures responsible for fibronectin deposition and fibrillogenesis. Plays a role in blood vessel development; acts as a negative regulator of angiogenesis by attenuating endothelial cell proliferation and migration, lumen formation and sprouting angiogenesis by promoting AKT phosphorylation and inhibiting ERK1/2 phosphorylation through activation of the Notch signaling pathway. Promotes transcriptional activity of the MYC promoter. The sequence is that of Integrin beta-1-binding protein 1 (ITGB1BP1) from Bos taurus (Bovine).